A 417-amino-acid chain; its full sequence is Hyaluronidase-3 (417 aa).

Positions 1–20 (MTTQLGPALVLGVALCLGCG) are cleaved as a signal peptide. 5 disulfides stabilise this stretch: C42–C331, C205–C220, C356–C367, C361–C395, and C397–C406. N69 carries N-linked (GlcNAc...) asparagine glycosylation. E129 serves as the catalytic Proton donor. N215 is a glycosylation site (N-linked (GlcNAc...) asparagine). One can recognise an EGF-like domain in the interval 352–407 (AAMACSHQRCHGHGRCARRDPGQMEAFLHLWPDGSLGDWKSFSCHCYWGWAGPTCQ).

The protein belongs to the glycosyl hydrolase 56 family. Post-translationally, N-glycosylated. As to expression, expressed in sperm. Highly expressed in epidermis of the skin, where it is expressed intracellularily in the deep horny layer (at protein level). Bone marrow, testis and kidney.

It localises to the secreted. The protein localises to the cell membrane. Its subcellular location is the cytoplasmic vesicle. The protein resides in the secretory vesicle. It is found in the acrosome. It localises to the endoplasmic reticulum. The protein localises to the early endosome. The enzyme catalyses Random hydrolysis of (1-&gt;4)-linkages between N-acetyl-beta-D-glucosamine and D-glucuronate residues in hyaluronate.. In terms of biological role, facilitates sperm penetration into the layer of cumulus cells surrounding the egg by digesting hyaluronic acid. Involved in induction of the acrosome reaction in the sperm. Involved in follicular atresia, the breakdown of immature ovarian follicles that are not selected to ovulate. Induces ovarian granulosa cell apoptosis, possibly via apoptotic signaling pathway involving CASP8 and CASP3 activation, and poly(ADP-ribose) polymerase (PARP) cleavage. Has no hyaluronidase activity in embryonic fibroblasts in vitro. Has no hyaluronidase activity in granulosa cells in vitro. This Homo sapiens (Human) protein is Hyaluronidase-3 (HYAL3).